The chain runs to 529 residues: Peptide chain release factor 3 (529 aa).

The tr-type G domain maps to 11 to 280 (NKRRTFAIIS…GLVKWAPAPM (270 aa)). GTP contacts are provided by residues 20–27 (SHPDAGKT), 88–92 (DTPGH), and 142–145 (NKLD).

This sequence belongs to the TRAFAC class translation factor GTPase superfamily. Classic translation factor GTPase family. PrfC subfamily.

The protein localises to the cytoplasm. Functionally, increases the formation of ribosomal termination complexes and stimulates activities of RF-1 and RF-2. It binds guanine nucleotides and has strong preference for UGA stop codons. It may interact directly with the ribosome. The stimulation of RF-1 and RF-2 is significantly reduced by GTP and GDP, but not by GMP. The chain is Peptide chain release factor 3 from Proteus mirabilis (strain HI4320).